Reading from the N-terminus, the 713-residue chain is Leucine-rich repeat-containing protein 4B (713 aa).

Residues 1–35 form the signal peptide; that stretch reads MARARGSPCPPLPPGRMSWPHGALLFLWLFSPPLG. The Extracellular portion of the chain corresponds to 36–576; it reads AGGGGVAVTS…DLDDVMKTTK (541 aa). Positions 48-86 constitute an LRRNT domain; that stretch reads GGGSPPATSCPVACSCSNQASRVICTRRDLAEVPASIPV. LRR repeat units follow at residues 87 to 108, 111 to 132, 135 to 156, 159 to 180, 183 to 205, 208 to 229, 230 to 251, 254 to 275, and 278 to 299; these read NTRY…TFKH, HLEI…AFNG, SLNT…AFEY, KLRE…AFNR, SLRR…AFEG, NLRY…TALV, RLEE…SFQG, SLRK…AFDD, and SLEE…LFTP. N224 carries N-linked (GlcNAc...) asparagine glycosylation. 8 N-linked (GlcNAc...) asparagine glycosylation sites follow: N283, N333, N374, N400, N422, N425, N444, and N452. Residues 311–363 enclose the LRRCT domain; the sequence is NPWHCNCDVLWLSWWLKETVPSNTTCCARCHAPAGLKGRYIGELDQSHFTCYA. The Ig-like C2-type domain maps to 364-452; that stretch reads PVIVEPPTDL…GNTTASATLN (89 aa). An intrachain disulfide couples C385 to C436. The tract at residues 497-551 is disordered; that stretch reads TQPGEEALQPRGTEKEPPGPTTDGVWGGGRPGDAAGPASSSTTAPAPRSSRPTEK. Residues 528–546 show a composition bias toward low complexity; the sequence is GDAAGPASSSTTAPAPRSS. The helical transmembrane segment at 577-597 threads the bilayer; that stretch reads IIIGCFVAITFMAAVMLVAFY. The Cytoplasmic portion of the chain corresponds to 598-713; that stretch reads KLRKQHQLHK…SKENVQETQI (116 aa). Phosphoserine is present on S693. The interval 694 to 713 is disordered; the sequence is IHEPLLFKSGSKENVQETQI. A compositionally biased stretch (basic and acidic residues) spans 703–713; it reads GSKENVQETQI.

Interacts with PTPRF. Interacts with DLG4. N-glycosylated. O-glycosylated; contains sialic acid.

Its subcellular location is the membrane. It localises to the presynaptic cell membrane. Functionally, synaptic adhesion protein. Regulates the formation of excitatory synapses. The trans-synaptic adhesion between LRRC4B and PTPRF regulates the formation of excitatory synapses in a bidirectional manner. This chain is Leucine-rich repeat-containing protein 4B (LRRC4B), found in Homo sapiens (Human).